The following is a 254-amino-acid chain: Undecaprenyl-diphosphatase 3 (254 aa).

8 consecutive transmembrane segments (helical) span residues 8 to 28 (TEFL…LIGF), 33 to 53 (AKVF…VIFW), 74 to 94 (LHII…HSAI), 97 to 117 (VLFG…LMIV), 133 to 153 (ITYK…WPGF), 174 to 194 (AEYT…LDLI), 207 to 227 (LFAT…VSFL), and 233 to 253 (VKLT…YFFI).

It belongs to the UppP family.

The protein localises to the cell membrane. The enzyme catalyses di-trans,octa-cis-undecaprenyl diphosphate + H2O = di-trans,octa-cis-undecaprenyl phosphate + phosphate + H(+). In terms of biological role, catalyzes the dephosphorylation of undecaprenyl diphosphate (UPP). Confers resistance to bacitracin. The chain is Undecaprenyl-diphosphatase 3 from Bacillus thuringiensis (strain Al Hakam).